A 173-amino-acid chain; its full sequence is Archaemetzincin (173 aa).

His-130 provides a ligand contact to Zn(2+). The active-site Proton acceptor is the Glu-131. Zn(2+) is bound by residues His-134, His-140, Cys-141, Cys-146, Cys-165, and Cys-168.

This sequence belongs to the peptidase M54 family. Monomer. Requires Zn(2+) as cofactor.

Probable zinc metalloprotease whose natural substrate is unknown. The chain is Archaemetzincin from Haloquadratum walsbyi (strain DSM 16790 / HBSQ001).